The sequence spans 492 residues: Aspartyl/glutamyl-tRNA(Asn/Gln) amidotransferase subunit B (492 aa).

Belongs to the GatB/GatE family. GatB subfamily. As to quaternary structure, heterotrimer of A, B and C subunits.

It catalyses the reaction L-glutamyl-tRNA(Gln) + L-glutamine + ATP + H2O = L-glutaminyl-tRNA(Gln) + L-glutamate + ADP + phosphate + H(+). The catalysed reaction is L-aspartyl-tRNA(Asn) + L-glutamine + ATP + H2O = L-asparaginyl-tRNA(Asn) + L-glutamate + ADP + phosphate + 2 H(+). Its function is as follows. Allows the formation of correctly charged Asn-tRNA(Asn) or Gln-tRNA(Gln) through the transamidation of misacylated Asp-tRNA(Asn) or Glu-tRNA(Gln) in organisms which lack either or both of asparaginyl-tRNA or glutaminyl-tRNA synthetases. The reaction takes place in the presence of glutamine and ATP through an activated phospho-Asp-tRNA(Asn) or phospho-Glu-tRNA(Gln). This chain is Aspartyl/glutamyl-tRNA(Asn/Gln) amidotransferase subunit B, found in Dehalococcoides mccartyi (strain CBDB1).